Reading from the N-terminus, the 248-residue chain is 23S rRNA (guanosine(2553)-2'-O)-methyltransferase RlmP (248 aa).

4 residues coordinate S-adenosyl-L-methionine: Arg123, Gly204, Val224, and Leu233.

The protein belongs to the class IV-like SAM-binding methyltransferase superfamily. RNA methyltransferase TrmH family. In terms of assembly, homodimer.

Its subcellular location is the cytoplasm. It carries out the reaction guanosine(2553) in 23S rRNA + S-adenosyl-L-methionine = 2'-O-methylguanosine(2553) in 23S rRNA + S-adenosyl-L-homocysteine + H(+). Its function is as follows. Specifically methylates the ribose of guanosine 2553 (G2553) in 23S rRNA. When the target G2553 is mutated, is able to methylate the ribose of adenosine, but it cannot methylate cytidine nor uridine. Modifies free 23S rRNA but not the fully assembled ribosome nor the 50S subunit, suggesting that the modification occurs early during ribosome biogenesis. The chain is 23S rRNA (guanosine(2553)-2'-O)-methyltransferase RlmP from Bacillus subtilis (strain 168).